A 138-amino-acid polypeptide reads, in one-letter code: Protein FAM136A (138 aa).

Alanine 2 carries the N-acetylalanine modification. Residues threonine 124 and threonine 126 each carry the phosphothreonine modification.

Belongs to the FAM136 family.

This chain is Protein FAM136A (FAM136A), found in Homo sapiens (Human).